We begin with the raw amino-acid sequence, 269 residues long: Shikimate dehydrogenase (NADP(+)) (269 aa).

Residues 22 to 24 and threonine 68 each bind shikimate; that span reads TLS. The Proton acceptor role is filled by lysine 72. Shikimate contacts are provided by asparagine 93 and aspartate 104. Residues 128–132, 152–157, and phenylalanine 210 each bind NADP(+); these read GAGGA and NRTKSR. Tyrosine 212 is a binding site for shikimate. NADP(+) is bound at residue glycine 233.

The protein belongs to the shikimate dehydrogenase family. In terms of assembly, homodimer.

The catalysed reaction is shikimate + NADP(+) = 3-dehydroshikimate + NADPH + H(+). Its pathway is metabolic intermediate biosynthesis; chorismate biosynthesis; chorismate from D-erythrose 4-phosphate and phosphoenolpyruvate: step 4/7. Its function is as follows. Involved in the biosynthesis of the chorismate, which leads to the biosynthesis of aromatic amino acids. Catalyzes the reversible NADPH linked reduction of 3-dehydroshikimate (DHSA) to yield shikimate (SA). This Saccharolobus solfataricus (strain ATCC 35092 / DSM 1617 / JCM 11322 / P2) (Sulfolobus solfataricus) protein is Shikimate dehydrogenase (NADP(+)).